The following is a 153-amino-acid chain: ATP synthase subunit b' (153 aa).

The helical transmembrane segment at 23–40 (LMAIQVVALTYILNSLFF) threads the bilayer.

It belongs to the ATPase B chain family. In terms of assembly, F-type ATPases have 2 components, F(1) - the catalytic core - and F(0) - the membrane proton channel. F(1) has five subunits: alpha(3), beta(3), gamma(1), delta(1), epsilon(1). F(0) has four main subunits: a(1), b(1), b'(1) and c(10-14). The alpha and beta chains form an alternating ring which encloses part of the gamma chain. F(1) is attached to F(0) by a central stalk formed by the gamma and epsilon chains, while a peripheral stalk is formed by the delta, b and b' chains.

It localises to the cellular thylakoid membrane. Functionally, f(1)F(0) ATP synthase produces ATP from ADP in the presence of a proton or sodium gradient. F-type ATPases consist of two structural domains, F(1) containing the extramembraneous catalytic core and F(0) containing the membrane proton channel, linked together by a central stalk and a peripheral stalk. During catalysis, ATP synthesis in the catalytic domain of F(1) is coupled via a rotary mechanism of the central stalk subunits to proton translocation. Its function is as follows. Component of the F(0) channel, it forms part of the peripheral stalk, linking F(1) to F(0). The b'-subunit is a diverged and duplicated form of b found in plants and photosynthetic bacteria. The sequence is that of ATP synthase subunit b' from Prochlorococcus marinus (strain AS9601).